The chain runs to 534 residues: Membrane protein insertase YidC (534 aa).

The next 5 helical transmembrane spans lie at 7–27 (IIAVVLSFIVLVGWGYLSEYM), 319–339 (AIDLGWFGFIARPLVTLLDFF), 342–362 (YVGNYGTAIILLTILIKLVFW), 413–433 (GGCLPMLVQIPVFFGLYQALL), and 493–513 (VMMFMPVVFTFLFLNFPSGLV).

Belongs to the OXA1/ALB3/YidC family. Type 1 subfamily. In terms of assembly, interacts with the Sec translocase complex via SecD. Specifically interacts with transmembrane segments of nascent integral membrane proteins during membrane integration.

The protein localises to the cell inner membrane. Functionally, required for the insertion and/or proper folding and/or complex formation of integral membrane proteins into the membrane. Involved in integration of membrane proteins that insert both dependently and independently of the Sec translocase complex, as well as at least some lipoproteins. Aids folding of multispanning membrane proteins. The protein is Membrane protein insertase YidC of Nitratidesulfovibrio vulgaris (strain ATCC 29579 / DSM 644 / CCUG 34227 / NCIMB 8303 / VKM B-1760 / Hildenborough) (Desulfovibrio vulgaris).